The following is a 392-amino-acid chain: Speckle-type POZ protein-like (392 aa).

One can recognise an MATH domain in the interval 31 to 161; sequence KFSYMWTINN…DDKLTLYCEV (131 aa). The region spanning 200–267 is the BTB domain; the sequence is TDCSLFVEGK…IYTGGTPHVD (68 aa).

This sequence belongs to the Tdpoz family. In terms of assembly, homodimer. Heterodimer with SPOP. Component of cullin-RING-based BCR (BTB-CUL3-RBX1) E3 ubiquitin-protein ligase complexes containing homodimeric SPOPL or the heterodimer formed by SPOP and SPOPL.

The protein resides in the nucleus. It functions in the pathway protein modification; protein ubiquitination. Component of a cullin-RING-based BCR (BTB-CUL3-RBX1) E3 ubiquitin-protein ligase complex that mediates the ubiquitination and subsequent proteasomal degradation of target proteins, but with relatively low efficiency. This is Speckle-type POZ protein-like (spopl) from Xenopus laevis (African clawed frog).